Consider the following 1070-residue polypeptide: DNA-directed RNA polymerase subunit beta (1070 aa).

This sequence belongs to the RNA polymerase beta chain family. In terms of assembly, in plastids the minimal PEP RNA polymerase catalytic core is composed of four subunits: alpha, beta, beta', and beta''. When a (nuclear-encoded) sigma factor is associated with the core the holoenzyme is formed, which can initiate transcription.

It is found in the plastid. The protein resides in the chloroplast. The catalysed reaction is RNA(n) + a ribonucleoside 5'-triphosphate = RNA(n+1) + diphosphate. Functionally, DNA-dependent RNA polymerase catalyzes the transcription of DNA into RNA using the four ribonucleoside triphosphates as substrates. The chain is DNA-directed RNA polymerase subunit beta from Solanum tuberosum (Potato).